The sequence spans 491 residues: Cytochrome P450 2C40 (491 aa).

Positions 1–25 (MDPFVVLVLCLSFLLVLSLWRQRSA) are cleaved as a signal peptide. A heme-binding site is contributed by Cys435.

It belongs to the cytochrome P450 family. Heme serves as cofactor. In terms of tissue distribution, liver, brain, kidney, and intestine, with trace amounts in lung and heart. Expressed throughout the intestinal tract, with higher expression levels in jejunum, cecum and colon.

It is found in the endoplasmic reticulum membrane. The protein resides in the microsome membrane. It carries out the reaction (5Z,8Z,11Z,14Z)-eicosatetraenoate + reduced [NADPH--hemoprotein reductase] + O2 = 16(R)-hydroxy-(5Z,8Z,11Z,14Z)-eicosatetraenoate + oxidized [NADPH--hemoprotein reductase] + H2O + H(+). The catalysed reaction is (5Z,8Z,11Z,14Z)-eicosatetraenoate + reduced [NADPH--hemoprotein reductase] + O2 = 16(S)-hydroxy-(5Z,8Z,11Z,14Z)-eicosatetraenoate + oxidized [NADPH--hemoprotein reductase] + H2O + H(+). It catalyses the reaction (5Z,8Z,11Z,14Z)-eicosatetraenoate + reduced [NADPH--hemoprotein reductase] + O2 = (14R,15S)-epoxy-(5Z,8Z,11Z)-eicosatrienoate + oxidized [NADPH--hemoprotein reductase] + H2O + H(+). The enzyme catalyses (5Z,8Z,11Z,14Z)-eicosatetraenoate + reduced [NADPH--hemoprotein reductase] + O2 = (14S,15R)-epoxy-(5Z,8Z,11Z)-eicosatrienoate + oxidized [NADPH--hemoprotein reductase] + H2O + H(+). It participates in lipid metabolism; arachidonate metabolism. In terms of biological role, a cytochrome P450 monooxygenase that may play a major role in the metabolism of arachidonic acid in the intestinal tract. Exhibits regioselective hydroxylase and epoxidase activity toward arachidonic acid, producing 16(R)-hydroxyeicosatetraenoic acid (HETE) and (14R,15S)-epoxyeicosatrienoic acid (EpETrE) as major products. Mechanistically, uses molecular oxygen inserting one oxygen atom into a substrate, and reducing the second into a water molecule, with two electrons provided by NADPH via cytochrome P450 reductase (CPR; NADPH-ferrihemoprotein reductase). This Mus musculus (Mouse) protein is Cytochrome P450 2C40.